Here is a 191-residue protein sequence, read N- to C-terminus: Guanylate kinase (191 aa).

Residues 6–184 (GLIIILSSPS…TIQQIHTIIL (179 aa)) form the Guanylate kinase-like domain. 13–20 (SPSGAGKS) provides a ligand contact to ATP.

Belongs to the guanylate kinase family.

The protein resides in the cytoplasm. It catalyses the reaction GMP + ATP = GDP + ADP. Functionally, essential for recycling GMP and indirectly, cGMP. The chain is Guanylate kinase from Rickettsia bellii (strain RML369-C).